The primary structure comprises 101 residues: Small ribosomal subunit protein bS6 (101 aa).

The protein belongs to the bacterial ribosomal protein bS6 family.

In terms of biological role, binds together with bS18 to 16S ribosomal RNA. In Nitratidesulfovibrio vulgaris (strain ATCC 29579 / DSM 644 / CCUG 34227 / NCIMB 8303 / VKM B-1760 / Hildenborough) (Desulfovibrio vulgaris), this protein is Small ribosomal subunit protein bS6.